Consider the following 242-residue polypeptide: Carboxy-S-adenosyl-L-methionine synthase (242 aa).

S-adenosyl-L-methionine is bound by residues Tyr39, Gly64–Ser66, Asp89–Asn90, Asp117–Ile118, Asn132, and Arg199.

Belongs to the class I-like SAM-binding methyltransferase superfamily. Cx-SAM synthase family. As to quaternary structure, homodimer.

The catalysed reaction is prephenate + S-adenosyl-L-methionine = carboxy-S-adenosyl-L-methionine + 3-phenylpyruvate + H2O. Functionally, catalyzes the conversion of S-adenosyl-L-methionine (SAM) to carboxy-S-adenosyl-L-methionine (Cx-SAM). This chain is Carboxy-S-adenosyl-L-methionine synthase, found in Psychromonas ingrahamii (strain DSM 17664 / CCUG 51855 / 37).